A 188-amino-acid polypeptide reads, in one-letter code: Elongation factor P (188 aa).

It belongs to the elongation factor P family.

The protein resides in the cytoplasm. It participates in protein biosynthesis; polypeptide chain elongation. In terms of biological role, involved in peptide bond synthesis. Stimulates efficient translation and peptide-bond synthesis on native or reconstituted 70S ribosomes in vitro. Probably functions indirectly by altering the affinity of the ribosome for aminoacyl-tRNA, thus increasing their reactivity as acceptors for peptidyl transferase. The polypeptide is Elongation factor P (Chlorobaculum parvum (strain DSM 263 / NCIMB 8327) (Chlorobium vibrioforme subsp. thiosulfatophilum)).